The sequence spans 98 residues: uncharacterized protein (98 aa).

The HTH cro/C1-type domain occupies 37-91 (LITSRQQLGISQKQLETLSGVKQPMIARIEKGQTNPQLETLLKLLAPLGKTLSIV). A DNA-binding region (H-T-H motif) is located at residues 48-67 (QKQLETLSGVKQPMIARIEK).

This is an uncharacterized protein from Haemophilus influenzae (strain ATCC 51907 / DSM 11121 / KW20 / Rd).